We begin with the raw amino-acid sequence, 336 residues long: HTH-type transcriptional repressor PurR (336 aa).

The region spanning Ala2 to Val56 is the HTH lacI-type domain. The segment at residues Ile4–Asn23 is a DNA-binding region (H-T-H motif). Residues Ser48 to Val56 mediate DNA binding. Hypoxanthine is bound by residues Tyr73, Lys188, Thr190, Phe219, and Asp273.

In terms of assembly, homodimer.

The protein operates within purine metabolism; purine nucleotide biosynthesis [regulation]. Is the main repressor of the genes involved in the de novo synthesis of purine nucleotides, regulating purB, purC, purEK, purF, purHD, purL, purMN and guaBA expression. PurR is allosterically activated to bind its cognate DNA by binding the purine corepressors, hypoxanthine or guanine, thereby effecting transcription repression. This chain is HTH-type transcriptional repressor PurR, found in Haemophilus influenzae (strain 86-028NP).